The sequence spans 723 residues: MANFFYSRITNRSYSTKNLLNIEDKGRLKDELEKTRQTNICEICLHPRGHRASVCRQILMGFAYTSKTVLEGLLSTMPHDDAPLGKIFVTDLPPYDEQVPQVLLMQAAALVTSYEYSFEDLAYFLVLPLQMALMQKSPSLGKDFPVISGYSITKDSVHSPVAFGRNLMPRGVSCEFPQIDVLYDYRGFLEGGAFSEGVTSFPKETKKPKVAVIGAGISGLVSATLLLRNGIDDVTIFEAKNVVGGRAHTHFFKGEPSVCAELGAMRFPRSQACLFYLLEYLGINAMTKFPNPGTVDTGLYYRGRSYNWKAHSLPPAIFNRVHKGWRTFLHAGFVDGVAAFASPFTLTECLRLRNYEFASSLWQKWLDAFSSETFSSGIERIFRGAHPPGGEKWTRDVDMELFKELGVGSGGFGPVFGCGFIEILRLIVNGYEDNVMLLLDGIEEIPRRLSQQKVGSYSIRDRIIHKEVKEIIRTESGISLAIGEGMHATFDRVIVTSGFTNIQLRHLLTNDDSFFSYDVNQAIENSHMTGSSKLFVLTQNKFWKAEELPSCILTTGVAKAVYCLDYEPDKPSGKGLVLLSYTWEDDSHKLLTFDKGERFQILKRDLAKSYPRFADLLEPADGDYDNNIIQHDWILDPYAGGAFKLNRRCEDVYSKRLFFQPLRLNGEPDGRVCLAGCSCSFSGGWVEGAIQTACNAAMATIRDAGGLISGDNPLTNEFVNYHY.

Residues Ser218, Glu238, Arg246, and Arg266 each coordinate FMN. Residue Arg266 coordinates substrate.

The protein belongs to the tryptophan 2-monooxygenase family. FMN is required as a cofactor.

The catalysed reaction is L-tryptophan + O2 = indole-3-acetamide + CO2 + H2O. It functions in the pathway plant hormone metabolism; auxin biosynthesis. The sequence is that of Tryptophan 2-monooxygenase (iaaM) from Allorhizobium ampelinum (strain ATCC BAA-846 / DSM 112012 / S4) (Agrobacterium vitis (strain S4)).